A 208-amino-acid polypeptide reads, in one-letter code: FMN-dependent NADH:quinone oxidoreductase (208 aa).

Residues Ser-17–Ser-19, Met-99–Leu-102, and Ser-143–Gly-146 contribute to the FMN site.

The protein belongs to the azoreductase type 1 family. As to quaternary structure, homodimer. FMN serves as cofactor.

The enzyme catalyses 2 a quinone + NADH + H(+) = 2 a 1,4-benzosemiquinone + NAD(+). The catalysed reaction is N,N-dimethyl-1,4-phenylenediamine + anthranilate + 2 NAD(+) = 2-(4-dimethylaminophenyl)diazenylbenzoate + 2 NADH + 2 H(+). Quinone reductase that provides resistance to thiol-specific stress caused by electrophilic quinones. Its function is as follows. Also exhibits azoreductase activity. Catalyzes the reductive cleavage of the azo bond in aromatic azo compounds to the corresponding amines. The protein is FMN-dependent NADH:quinone oxidoreductase of Staphylococcus aureus (strain COL).